A 238-amino-acid chain; its full sequence is Protein E6 (238 aa).

The segment covering 40-51 (KETTTREQKHET) has biased composition (basic and acidic residues). 2 disordered regions span residues 40–64 (KETTTREQKHETFVPQTTQKPEEQE) and 210–238 (EFNENRYNNMGRYHQNQEEFEESEEEFEP). Positions 227–238 (EEFEESEEEFEP) are enriched in acidic residues.

In terms of tissue distribution, it is predominantly expressed in fiber cells.

It is found in the secreted. The protein resides in the cell wall. This chain is Protein E6 (E6), found in Gossypium hirsutum (Upland cotton).